Reading from the N-terminus, the 85-residue chain is METLLSFSAIAVGIIVGLASLGTAIGFAILGGKFLEGAARQPEMAPMLQVKMFIIAGLLDAVPMIGIVIALLFTFANPFVGQLAG.

2 helical membrane-spanning segments follow: residues I10–L30 and F53–F73.

Belongs to the ATPase C chain family. As to quaternary structure, F-type ATPases have 2 components, F(1) - the catalytic core - and F(0) - the membrane proton channel. F(1) has five subunits: alpha(3), beta(3), gamma(1), delta(1), epsilon(1). F(0) has three main subunits: a(1), b(2) and c(10-14). The alpha and beta chains form an alternating ring which encloses part of the gamma chain. F(1) is attached to F(0) by a central stalk formed by the gamma and epsilon chains, while a peripheral stalk is formed by the delta and b chains.

The protein resides in the cell inner membrane. Functionally, f(1)F(0) ATP synthase produces ATP from ADP in the presence of a proton or sodium gradient. F-type ATPases consist of two structural domains, F(1) containing the extramembraneous catalytic core and F(0) containing the membrane proton channel, linked together by a central stalk and a peripheral stalk. During catalysis, ATP synthesis in the catalytic domain of F(1) is coupled via a rotary mechanism of the central stalk subunits to proton translocation. In terms of biological role, key component of the F(0) channel; it plays a direct role in translocation across the membrane. A homomeric c-ring of between 10-14 subunits forms the central stalk rotor element with the F(1) delta and epsilon subunits. The polypeptide is ATP synthase subunit c (Aliivibrio salmonicida (strain LFI1238) (Vibrio salmonicida (strain LFI1238))).